Reading from the N-terminus, the 81-residue chain is Photosystem I iron-sulfur center (81 aa).

2 consecutive 4Fe-4S ferredoxin-type domains span residues alanine 2–tryptophan 31 and isoleucine 39–tyrosine 68. [4Fe-4S] cluster is bound by residues cysteine 11, cysteine 14, cysteine 17, cysteine 21, cysteine 48, cysteine 51, cysteine 54, and cysteine 58.

In terms of assembly, the eukaryotic PSI reaction center is composed of at least 11 subunits. [4Fe-4S] cluster is required as a cofactor.

It localises to the plastid. It is found in the chloroplast thylakoid membrane. The catalysed reaction is reduced [plastocyanin] + hnu + oxidized [2Fe-2S]-[ferredoxin] = oxidized [plastocyanin] + reduced [2Fe-2S]-[ferredoxin]. Its function is as follows. Apoprotein for the two 4Fe-4S centers FA and FB of photosystem I (PSI); essential for photochemical activity. FB is the terminal electron acceptor of PSI, donating electrons to ferredoxin. The C-terminus interacts with PsaA/B/D and helps assemble the protein into the PSI complex. Required for binding of PsaD and PsaE to PSI. PSI is a plastocyanin/cytochrome c6-ferredoxin oxidoreductase, converting photonic excitation into a charge separation, which transfers an electron from the donor P700 chlorophyll pair to the spectroscopically characterized acceptors A0, A1, FX, FA and FB in turn. The polypeptide is Photosystem I iron-sulfur center (Gracilaria tenuistipitata var. liui (Red alga)).